The following is a 1160-amino-acid chain: DNA polymerase III subunit alpha (1160 aa).

This sequence belongs to the DNA polymerase type-C family. DnaE subfamily. As to quaternary structure, the DNA polymerase III holoenzyme complex contains at least 10 different subunits organized into 3 functionally essential subassemblies: the Pol III core, the beta sliding clamp processivity factor and the clamp-loading complex. The Pol III core (subunits alpha, epsilon and theta) contains the polymerase and the 3'-5' exonuclease proofreading activities. The polymerase is tethered to the template via the dimeric beta sliding clamp processivity factor. The clamp loader (also called gamma complex) assembles the beta sliding clamp onto the primed template and plays a central role in the organization and communication at the replication fork. The clamp-loading complex contains delta, delta', psi and chi, and 3 copies of either or both of two different DnaX proteins, gamma and tau. The DNA replisome complex has a single clamp loader (3 tau and 1 each of delta, delta', psi and chi subunits) which binds 3 Pol III cores (1 core on the leading strand and 2 on the lagging strand) each with a beta sliding clamp dimer. Additional proteins in the replisome are other copies of gamma, psi and chi, Ssb, DNA helicase and RNA primase. Interacts with the beta sliding-clamp subunit via the peptide Gln-Ala-Asp-Met-Phe (residues 920-924).

It localises to the cytoplasm. The enzyme catalyses DNA(n) + a 2'-deoxyribonucleoside 5'-triphosphate = DNA(n+1) + diphosphate. Its function is as follows. DNA polymerase III is a complex, multichain enzyme responsible for most of the replicative synthesis in bacteria. This DNA polymerase also exhibits 3' to 5' exonuclease activity. The alpha chain is the DNA polymerase catalytic subunit. It is tethered to replicating DNA by the beta sliding clamp (dnaN), which confers extremely high processivity to the catalytic subunit, copying a 5.4 kb genome in 11 seconds, a speed of at least 500 nucleotides/second at 30 degrees Celsius. The chain is DNA polymerase III subunit alpha (dnaE) from Escherichia coli (strain K12).